The sequence spans 149 residues: Lipoprotein signal peptidase (149 aa).

The next 2 helical transmembrane spans lie at 58–78 (WFFIAITAVVVIGIVISLIRL) and 85–105 (ASLALSFVLGGAVGNFIDRAM). Active-site residues include Asp111 and Asp127. Residues 122–142 (IFNVADMAITIGVGILLLDVF) form a helical membrane-spanning segment.

This sequence belongs to the peptidase A8 family.

The protein resides in the cell membrane. The enzyme catalyses Release of signal peptides from bacterial membrane prolipoproteins. Hydrolyzes -Xaa-Yaa-Zaa-|-(S,diacylglyceryl)Cys-, in which Xaa is hydrophobic (preferably Leu), and Yaa (Ala or Ser) and Zaa (Gly or Ala) have small, neutral side chains.. Its pathway is protein modification; lipoprotein biosynthesis (signal peptide cleavage). Its function is as follows. This protein specifically catalyzes the removal of signal peptides from prolipoproteins. This is Lipoprotein signal peptidase from Brevibacillus brevis (strain 47 / JCM 6285 / NBRC 100599).